Consider the following 202-residue polypeptide: MRTATITRETKETQIYLTLDLDGSGRSEIDTNIGFLDHMLTLLAFHSDFDIKLTAHGDHENLGMDPHHLIEDVAISLGKCINEALGDKLGIRRYGSFTIPMDEALVTCDLDISGRPYLVFNADLSGNQKLGGYDTEMTEEFFRALAFNAGITLHINEHYGKNTHHIIEGIFKSMARALKQAISIDETKVGKIPSSKGVLRAN.

Belongs to the imidazoleglycerol-phosphate dehydratase family.

Its subcellular location is the cytoplasm. The catalysed reaction is D-erythro-1-(imidazol-4-yl)glycerol 3-phosphate = 3-(imidazol-4-yl)-2-oxopropyl phosphate + H2O. Its pathway is amino-acid biosynthesis; L-histidine biosynthesis; L-histidine from 5-phospho-alpha-D-ribose 1-diphosphate: step 6/9. This chain is Imidazoleglycerol-phosphate dehydratase, found in Lactococcus lactis subsp. cremoris (strain SK11).